The following is a 223-amino-acid chain: Putative C-type lectin protein 51 (223 aa).

The signal sequence occupies residues 1–31 (MAKRINFTSCLIFTSCFTAFIVSLCLLVSSC). The C-type lectin domain maps to 111-218 (QEGRCYHYSR…CDTPRRCLCG (108 aa)). A disulfide bond links Cys-193 and Cys-209.

This is Putative C-type lectin protein 51 (51) from Equine herpesvirus 2 (strain 86/87) (EHV-2).